The chain runs to 480 residues: Argininosuccinate lyase (480 aa).

Residues 1–20 (MTQQDGGQAGQAEPTKLWGG) are disordered.

This sequence belongs to the lyase 1 family. Argininosuccinate lyase subfamily.

Its subcellular location is the cytoplasm. The enzyme catalyses 2-(N(omega)-L-arginino)succinate = fumarate + L-arginine. Its pathway is amino-acid biosynthesis; L-arginine biosynthesis; L-arginine from L-ornithine and carbamoyl phosphate: step 3/3. This chain is Argininosuccinate lyase, found in Saccharopolyspora erythraea (strain ATCC 11635 / DSM 40517 / JCM 4748 / NBRC 13426 / NCIMB 8594 / NRRL 2338).